We begin with the raw amino-acid sequence, 72 residues long: Large ribosomal subunit protein bL31 (72 aa).

Zn(2+) contacts are provided by C16, C18, C38, and C41.

The protein belongs to the bacterial ribosomal protein bL31 family. Type A subfamily. Part of the 50S ribosomal subunit. The cofactor is Zn(2+).

Binds the 23S rRNA. The protein is Large ribosomal subunit protein bL31 of Aliivibrio fischeri (strain ATCC 700601 / ES114) (Vibrio fischeri).